A 298-amino-acid polypeptide reads, in one-letter code: Protoheme IX farnesyltransferase (298 aa).

9 consecutive transmembrane segments (helical) span residues 24–44, 49–69, 100–120, 121–141, 149–169, 175–195, 220–240, 244–264, and 277–297; these read VIQL…PGLP, LQLA…AAAF, LLFS…WVNP, LTMW…TVIL, IVIG…AMAG, ALIL…ALAL, LMVL…YVYG, WLYL…AFYL, and FRFS…DHYL.

The protein belongs to the UbiA prenyltransferase family. Protoheme IX farnesyltransferase subfamily.

It localises to the cell inner membrane. It catalyses the reaction heme b + (2E,6E)-farnesyl diphosphate + H2O = Fe(II)-heme o + diphosphate. It participates in porphyrin-containing compound metabolism; heme O biosynthesis; heme O from protoheme: step 1/1. Its function is as follows. Converts heme B (protoheme IX) to heme O by substitution of the vinyl group on carbon 2 of heme B porphyrin ring with a hydroxyethyl farnesyl side group. This Albidiferax ferrireducens (strain ATCC BAA-621 / DSM 15236 / T118) (Rhodoferax ferrireducens) protein is Protoheme IX farnesyltransferase.